Reading from the N-terminus, the 313-residue chain is tRNA dimethylallyltransferase (313 aa).

11-18 lines the ATP pocket; it reads GPTACGKT. 13–18 is a binding site for substrate; sequence TACGKT. 3 interaction with substrate tRNA regions span residues 36–39, 160–164, and 243–248; these read DSAL, QRIGR, and RCVGYR.

The protein belongs to the IPP transferase family. As to quaternary structure, monomer. Requires Mg(2+) as cofactor.

The catalysed reaction is adenosine(37) in tRNA + dimethylallyl diphosphate = N(6)-dimethylallyladenosine(37) in tRNA + diphosphate. Functionally, catalyzes the transfer of a dimethylallyl group onto the adenine at position 37 in tRNAs that read codons beginning with uridine, leading to the formation of N6-(dimethylallyl)adenosine (i(6)A). In Neisseria gonorrhoeae (strain NCCP11945), this protein is tRNA dimethylallyltransferase.